The chain runs to 131 residues: Small ribosomal subunit protein uS11 (131 aa).

Belongs to the universal ribosomal protein uS11 family. In terms of assembly, part of the 30S ribosomal subunit. Interacts with proteins S7 and S18. Binds to IF-3.

Functionally, located on the platform of the 30S subunit, it bridges several disparate RNA helices of the 16S rRNA. Forms part of the Shine-Dalgarno cleft in the 70S ribosome. This Thermotoga neapolitana (strain ATCC 49049 / DSM 4359 / NBRC 107923 / NS-E) protein is Small ribosomal subunit protein uS11.